Here is a 229-residue protein sequence, read N- to C-terminus: NAD-dependent protein deacetylase (229 aa).

In terms of domain architecture, Deacetylase sirtuin-type spans 1-229 (MNNLKEAIKQ…NDAVKVFAEI (229 aa)). NAD(+) contacts are provided by A20, R32, Q96, I98, D99, H114, T181, S182, N205, and V223. I98 and D99 together coordinate nicotinamide. The Proton acceptor role is filled by H114.

Belongs to the sirtuin family. Class U subfamily.

It localises to the cytoplasm. The catalysed reaction is N(6)-acetyl-L-lysyl-[protein] + NAD(+) + H2O = 2''-O-acetyl-ADP-D-ribose + nicotinamide + L-lysyl-[protein]. Its function is as follows. NAD-dependent protein deacetylase which modulates the activities of several enzymes which are inactive in their acetylated form. This is NAD-dependent protein deacetylase from Listeria innocua serovar 6a (strain ATCC BAA-680 / CLIP 11262).